Here is a 322-residue protein sequence, read N- to C-terminus: Ethylmalonyl-CoA decarboxylase (322 aa).

The residue at position 232 (Lys-232) is an N6-acetyllysine; alternate. An N6-succinyllysine; alternate modification is found at Lys-232. At Lys-316 the chain carries N6-succinyllysine.

Belongs to the enoyl-CoA hydratase/isomerase family.

Its subcellular location is the cytoplasm. The protein localises to the cytosol. It catalyses the reaction (2S)-ethylmalonyl-CoA + H(+) = butanoyl-CoA + CO2. It carries out the reaction (S)-methylmalonyl-CoA + H(+) = propanoyl-CoA + CO2. The catalysed reaction is (2R)-ethylmalonyl-CoA + H(+) = butanoyl-CoA + CO2. Functionally, decarboxylates ethylmalonyl-CoA, a potentially toxic metabolite, to form butyryl-CoA, suggesting it might be involved in metabolite proofreading. Acts preferentially on (S)-ethylmalonyl-CoA but also has some activity on the (R)-isomer. Also has methylmalonyl-CoA decarboxylase activity at lower level. In Mus musculus (Mouse), this protein is Ethylmalonyl-CoA decarboxylase (Echdc1).